We begin with the raw amino-acid sequence, 659 residues long: Centrosomal protein of 76 kDa (659 aa).

Residues S75 and S83 each carry the phosphoserine modification.

This sequence belongs to the CEP76 family. In terms of assembly, interacts with CCP110 and CEP97.

Its subcellular location is the cytoplasm. It is found in the cytoskeleton. The protein localises to the microtubule organizing center. The protein resides in the centrosome. It localises to the centriole. Functionally, centrosomal protein involved in regulation of centriole duplication. Required to limit centriole duplication to once per cell cycle by preventing centriole reduplication. The chain is Centrosomal protein of 76 kDa (CEP76) from Homo sapiens (Human).